The sequence spans 237 residues: Cytochrome c oxidase subunit 2 (237 aa).

Topologically, residues 1 to 30 (MNLVAPTPWGLFFQDSATPQMEGIEELHNN) are mitochondrial intermembrane. The helical transmembrane segment at 31–51 (IMFYLTIILFSVTWMMITIIK) threads the bilayer. Residues 52–67 (SFVNTKSPISHKYMNH) lie on the Mitochondrial matrix side of the membrane. The chain crosses the membrane as a helical span at residues 68 to 94 (GTLIELIWTITPAVILILIAFPSFKLL). Topologically, residues 95-237 (YLMDEVMDPS…SVSLKNFYYD (143 aa)) are mitochondrial intermembrane. Cu cation contacts are provided by His-176, Cys-211, Glu-213, Cys-215, His-219, and Met-222. Glu-213 serves as a coordination point for Mg(2+).

This sequence belongs to the cytochrome c oxidase subunit 2 family. In terms of assembly, component of the cytochrome c oxidase (complex IV, CIV), a multisubunit enzyme composed of a catalytic core of 3 subunits and several supernumerary subunits. The complex exists as a monomer or a dimer and forms supercomplexes (SCs) in the inner mitochondrial membrane with ubiquinol-cytochrome c oxidoreductase (cytochrome b-c1 complex, complex III, CIII). It depends on Cu cation as a cofactor.

Its subcellular location is the mitochondrion inner membrane. The enzyme catalyses 4 Fe(II)-[cytochrome c] + O2 + 8 H(+)(in) = 4 Fe(III)-[cytochrome c] + 2 H2O + 4 H(+)(out). In terms of biological role, component of the cytochrome c oxidase, the last enzyme in the mitochondrial electron transport chain which drives oxidative phosphorylation. The respiratory chain contains 3 multisubunit complexes succinate dehydrogenase (complex II, CII), ubiquinol-cytochrome c oxidoreductase (cytochrome b-c1 complex, complex III, CIII) and cytochrome c oxidase (complex IV, CIV), that cooperate to transfer electrons derived from NADH and succinate to molecular oxygen, creating an electrochemical gradient over the inner membrane that drives transmembrane transport and the ATP synthase. Cytochrome c oxidase is the component of the respiratory chain that catalyzes the reduction of oxygen to water. Electrons originating from reduced cytochrome c in the intermembrane space (IMS) are transferred via the dinuclear copper A center (CU(A)) of subunit 2 and heme A of subunit 1 to the active site in subunit 1, a binuclear center (BNC) formed by heme A3 and copper B (CU(B)). The BNC reduces molecular oxygen to 2 water molecules using 4 electrons from cytochrome c in the IMS and 4 protons from the mitochondrial matrix. The chain is Cytochrome c oxidase subunit 2 (COX2) from Trichophyton rubrum (Athlete's foot fungus).